The following is a 118-amino-acid chain: Large ribosomal subunit protein uL18 (118 aa).

Positions 1 to 24 are disordered; sequence MISKPDKNKTRQRRHARVRGKISG. The segment covering 10 to 20 has biased composition (basic residues); the sequence is TRQRRHARVRG.

The protein belongs to the universal ribosomal protein uL18 family. As to quaternary structure, part of the 50S ribosomal subunit; part of the 5S rRNA/L5/L18/L25 subcomplex. Contacts the 5S and 23S rRNAs.

This is one of the proteins that bind and probably mediate the attachment of the 5S RNA into the large ribosomal subunit, where it forms part of the central protuberance. This chain is Large ribosomal subunit protein uL18, found in Lactiplantibacillus plantarum (strain ATCC BAA-793 / NCIMB 8826 / WCFS1) (Lactobacillus plantarum).